Here is a 34-residue protein sequence, read N- to C-terminus: Potassium channel toxin alpha-KTx 6.3 (34 aa).

Cystine bridges form between C3–C24, C9–C29, C13–C31, and C19–C34. A Cysteine amide modification is found at C34.

This sequence belongs to the short scorpion toxin superfamily. Potassium channel inhibitor family. Alpha-KTx 06 subfamily. Amidated. The amidated toxin shows 5-fold more affinity for Kv1.3/KCNA3 than the synthetic carboxylated form. Expressed by the venom gland.

The protein resides in the secreted. Its function is as follows. Potently blocks voltage-gated potassium channels Kv1.1/KCNA1 (IC(50)=7-11 nM) and Kv1.3/KCNA3 (IC(50)=11-29 pM). Also mildly blocks intermediate (IK) conductance calcium-activated potassium channels (KCa3.1/KCNN4) and ERG1/Kv11.1/KCNH2. Shows ability to suppress proliferation of lymphocytes, which are known to be sensitive to Kv1.3/KCNA3 homotetrameric channel block. In Heterometrus spinifer (Asia giant forest scorpion), this protein is Potassium channel toxin alpha-KTx 6.3.